Reading from the N-terminus, the 188-residue chain is Putative pre-16S rRNA nuclease (188 aa).

Residues 144 to 188 (HAPGRVVAGPKGRRKARHRGQGGTGTEQQADAGGRARPHATEGKG) are disordered. A compositionally biased stretch (basic residues) spans 154 to 163 (KGRRKARHRG).

This sequence belongs to the YqgF nuclease family.

The protein localises to the cytoplasm. Its function is as follows. Could be a nuclease involved in processing of the 5'-end of pre-16S rRNA. This is Putative pre-16S rRNA nuclease from Kineococcus radiotolerans (strain ATCC BAA-149 / DSM 14245 / SRS30216).